The following is a 385-amino-acid chain: S-type anion channel SLAH1 (385 aa).

The Cytoplasmic segment spans residues 1-42 (MEIPRQEIHIEIDNSIPSSKEFKTGLADAKPVVLMSALRSLH). A helical membrane pass occupies residues 43–65 (AGYFRISLSLCSQALLWKIMIAP). The Extracellular segment spans residues 66–81 (ESPSMSHMHSKLPSMA). Residues 82 to 102 (FHLLWYLALVTQVSLCFLYAL) traverse the membrane as a helical segment. Topologically, residues 103-114 (KCIFFFDKVKEE) are cytoplasmic. The chain crosses the membrane as a helical span at residues 115–135 (FLHYIGVNYLYAPSISWLLML). The Extracellular segment spans residues 136–150 (QSAPMMEPNSVLYQT). Residues 151–171 (LFWIFAVPVLTLDIKLYGQWF) form a helical membrane-spanning segment. Residues 172 to 176 (TTEKR) lie on the Cytoplasmic side of the membrane. A helical membrane pass occupies residues 177–197 (FLSMLANPASQVSVIANLVAA). Topologically, residues 198 to 207 (RGAAEMGWNE) are extracellular. A helical transmembrane segment spans residues 208–228 (CALCMFSLGMVHYLVIFVTLY). The Cytoplasmic segment spans residues 229-243 (QRLPGGNNFPAKLRP). Residues 244 to 264 (IFFLFVAAPAMASLAWNSICG) form a helical membrane-spanning segment. Position 265 (Thr265) is a topological domain, extracellular. Residues 266–286 (FDAVAKMLFFLSLFIFMSLVC) form a helical membrane-spanning segment. The Cytoplasmic portion of the chain corresponds to 287 to 299 (RPNLFKKSMKRFN). A helical membrane pass occupies residues 300–320 (VAWWAYSFPLTFLALDSVQYA). Residues 321–330 (QEVKDPVGSG) lie on the Extracellular side of the membrane. A helical membrane pass occupies residues 331–351 (LMLIFSSISVLIFLGMMVLTA). At 352–385 (ANSNRLLRHDPVLGSATDPKDKQKTLSLNATNQN) the chain is on the cytoplasmic side. A disordered region spans residues 366-385 (SATDPKDKQKTLSLNATNQN). Residues 376 to 385 (TLSLNATNQN) are compositionally biased toward polar residues.

Belongs to the SLAC1 S-type anion channel family. In terms of assembly, homotrimer. As to expression, expressed in the vascular systems of root.

The protein localises to the cell membrane. Functionally, slow, weak voltage-dependent S-type anion efflux channel involved in maintenance of anion homeostasis. The protein is S-type anion channel SLAH1 (SLAH1) of Arabidopsis thaliana (Mouse-ear cress).